The chain runs to 600 residues: MPVDSKLIRNFSIIAHIDHGKSTLADRILDATGALTAREQKEQFLDKMDIERERGITIKAQTVRLDYTAKDGQTYRLHLIDTPGHVDFNYEVSRSLQACEGALLVVDATQGVEAQTLANVFLALDNNLAILPVLNKIDLPSADIERTTREIEDVIGLDCSGAIPASAKTGIGIAEILEAVVERIPAPKGDPNAAPRALIFDSWYDSYRGAVVMVRVVDGIIRKGQKVRFMATGRDYEVTEMGVFTPHATAITELGPGEVGFLVGNIKSVVDTKIGDTVTDAVHPATTPLPGFKEVKPMVFAGIFPTDSAQYEDLRDALSKLHMNDAAFVFEPDTSEALGFGFRCGFLGLLHMEIIQERLEREYNLDLITTAPSVVYHCYLNDGSMKSIENPAKLPPPNLTDRIEEPIFRMTVHVPSTYVGAVLALCQERRGEQKSIQYASSDRVIITYDMPLSEVLFDFHDKLKSVSRGYASMDYELVGYRADDLIKLDMLVNGDPLDALSVIVHRDKAYARGRDLAVKLKDIVPRQQYEVAIQAAIGSKVIARTTVKAMRKDVTAKCYGGDISRKRKLLEKQKEGKKRMKMVGSVEIPQEAFLAILKID.

The region spanning 6–188 (KLIRNFSIIA…AVVERIPAPK (183 aa)) is the tr-type G domain. Residues 18–23 (DHGKST) and 135–138 (NKID) each bind GTP.

It belongs to the TRAFAC class translation factor GTPase superfamily. Classic translation factor GTPase family. LepA subfamily.

Its subcellular location is the cell inner membrane. The enzyme catalyses GTP + H2O = GDP + phosphate + H(+). Functionally, required for accurate and efficient protein synthesis under certain stress conditions. May act as a fidelity factor of the translation reaction, by catalyzing a one-codon backward translocation of tRNAs on improperly translocated ribosomes. Back-translocation proceeds from a post-translocation (POST) complex to a pre-translocation (PRE) complex, thus giving elongation factor G a second chance to translocate the tRNAs correctly. Binds to ribosomes in a GTP-dependent manner. The chain is Elongation factor 4 from Sorangium cellulosum (strain So ce56) (Polyangium cellulosum (strain So ce56)).